A 137-amino-acid polypeptide reads, in one-letter code: Protein Turandot X (137 aa).

Positions 1–24 (MRVPVFQLSCLLGLIVCLLCSVKA) are cleaved as a signal peptide.

This sequence belongs to the Turandot family.

It is found in the secreted. Its function is as follows. A humoral factor that may play a role in stress tolerance. This Drosophila pseudoobscura pseudoobscura (Fruit fly) protein is Protein Turandot X.